The sequence spans 1014 residues: Disease resistance protein RGA4 (1014 aa).

The interval 1 to 182 is structured coiled coil (CC) domain; the sequence is MEAALLSGFI…PRIHEADLVG (182 aa). A coiled-coil region spans residues 105-145; the sequence is RTVRATKKLLQTNQHLAQELQRLKRMVEEANQRKQRYTAAA. The region spanning 189 to 466 is the NB-ARC domain; the sequence is ELLEQLAERQ…WLAEGFVEPV (278 aa). LRR repeat units follow at residues 484 to 506, 507 to 530, 531 to 552, 580 to 602, 603 to 624, 625 to 647, 701 to 725, 762 to 784, 785 to 807, 808 to 833, and 854 to 877; these read RNIIEPINVSNNDKVKTCQTYGM, MREFISHMSISQNFVTFFCDDKFL, PKYVRRLSLHGDTVVNGDNFNG, LRVLDLEKCDDLNDDHLKEICNL, VLLKYLSLGGNISKLPKDIAKL, KDLEALDVRRSKVKIMPVEVFGL, MNKLRKLKIWCTSSAGSTDWTDLRE, PCYLSSLKLHGNFPQLPQFVTSL, RGLKELCLSSTKFTTGLLEALSN, LSYLQYLKLVADELEKFIIKVQGFPR, and LPFLVTLQLLCKDLHGLSDIKIEC.

This sequence belongs to the disease resistance NB-LRR family. Expressed in leaves.

Functionally, probable disease resistance protein. Resistance proteins guard the plant against pathogens that contain an appropriate avirulence protein via an indirect interaction with this avirulence protein. That triggers a defense system including the hypersensitive response, which restricts the pathogen growth. At the opposite of cultivars Aichi asahi and Sasanishiki, the cultivars Nipponbare, Mokoto and Hitomebore don't recognize the effector avirulence protein AVR-Pia from M.oryzae. This chain is Disease resistance protein RGA4, found in Oryza sativa subsp. japonica (Rice).